The following is a 264-amino-acid chain: Tryptophan synthase alpha chain (264 aa).

Active-site proton acceptor residues include glutamate 49 and aspartate 60.

This sequence belongs to the TrpA family. As to quaternary structure, tetramer of two alpha and two beta chains.

The catalysed reaction is (1S,2R)-1-C-(indol-3-yl)glycerol 3-phosphate + L-serine = D-glyceraldehyde 3-phosphate + L-tryptophan + H2O. Its pathway is amino-acid biosynthesis; L-tryptophan biosynthesis; L-tryptophan from chorismate: step 5/5. In terms of biological role, the alpha subunit is responsible for the aldol cleavage of indoleglycerol phosphate to indole and glyceraldehyde 3-phosphate. In Synechocystis sp. (strain ATCC 27184 / PCC 6803 / Kazusa), this protein is Tryptophan synthase alpha chain.